Reading from the N-terminus, the 171-residue chain is Co-chaperone protein HscB (171 aa).

The 73-residue stretch at 2 to 74 folds into the J domain; it reads DYFTLFGLPA…LTRAEYLLSL (73 aa).

It belongs to the HscB family. Interacts with HscA and stimulates its ATPase activity. Interacts with IscU.

Co-chaperone involved in the maturation of iron-sulfur cluster-containing proteins. Seems to help targeting proteins to be folded toward HscA. The polypeptide is Co-chaperone protein HscB (Citrobacter koseri (strain ATCC BAA-895 / CDC 4225-83 / SGSC4696)).